A 383-amino-acid polypeptide reads, in one-letter code: MVQIFKFLLKSNKSPARAHFRPSFLDTLRLAVRGGHGGNGLPKYGGVGGQGGCVYFVAKEGLTLRKMAQGLKDRRVAASSGEDSSKVSIFGKRGVDTRIEVPVGVQVYDEQQKLLADLNENDAKCIVAGGGTGGCTGNNFLGRPGENRIVNLDLKLIADVGLVGFPNAGKSTLLKAVSNAKPKIAAYPFTTIRPQIGTIEYGDLRSISLADLPGLIEGAHANFGMGHKFLKHIERTRLLLFMVDIFGFQLSPRHPHRDCLANIYSLNKELELYDPSLLEKPCVLLLNKMDKEGAHDILTKVKPIIDDLSSGLADCPEEVRPKRVLKFESIVPISAINSTRVTQVKSQLRRTLVRLAEKQFVSDGEQIKEQLQQRVGLVGPRIT.

One can recognise an Obg domain in the interval 22–157; it reads PSFLDTLRLA…RIVNLDLKLI (136 aa). In terms of domain architecture, OBG-type G spans 158–353; the sequence is ADVGLVGFPN…VKSQLRRTLV (196 aa). GTP contacts are provided by residues 164 to 171, 211 to 215, and 287 to 290; these read GFPNAGKS, DLPGL, and NKMD.

The protein belongs to the TRAFAC class OBG-HflX-like GTPase superfamily. OBG GTPase family.

It localises to the nucleus. The protein resides in the nucleolus. May be involved in the ribosome maturation process. The protein is GTP-binding protein 10 homolog of Drosophila pseudoobscura pseudoobscura (Fruit fly).